The sequence spans 131 residues: Pancreatic polypeptide prohormone (131 aa).

The first 29 residues, 1-29 (MAAAHRCLFLLLLSTCVALLLQPPLGALG), serve as a signal peptide directing secretion. Y65 bears the Tyrosine amide mark.

It belongs to the NPY family.

The protein resides in the secreted. Hormone secreted by pancreatic cells that acts as a regulator of pancreatic and gastrointestinal functions probably by signaling through the G protein-coupled receptor NPY4R2. The sequence is that of Pancreatic polypeptide prohormone (PPY) from Bos taurus (Bovine).